The sequence spans 203 residues: ATP-dependent dethiobiotin synthetase BioD (203 aa).

11 to 16 serves as a coordination point for ATP; it reads NVGKTI. Thr15 is a binding site for Mg(2+). Lys31 is an active-site residue. Substrate is bound at residue Thr35. ATP contacts are provided by residues Asp42 and 94-97; that span reads EGAG. Positions 42 and 94 each coordinate Mg(2+).

It belongs to the dethiobiotin synthetase family. Homodimer. Requires Mg(2+) as cofactor.

The protein localises to the cytoplasm. It carries out the reaction (7R,8S)-7,8-diammoniononanoate + CO2 + ATP = (4R,5S)-dethiobiotin + ADP + phosphate + 3 H(+). Its pathway is cofactor biosynthesis; biotin biosynthesis; biotin from 7,8-diaminononanoate: step 1/2. Its function is as follows. Catalyzes a mechanistically unusual reaction, the ATP-dependent insertion of CO2 between the N7 and N8 nitrogen atoms of 7,8-diaminopelargonic acid (DAPA, also called 7,8-diammoniononanoate) to form a ureido ring. This Lawsonia intracellularis (strain PHE/MN1-00) protein is ATP-dependent dethiobiotin synthetase BioD.